The chain runs to 53 residues: MNKLNSNAVVSLNEVSDSELDTILGGNRWWQGVVPTVSYECRMNSWQHVFTCC.

Residues 1-26 constitute a propeptide that is removed on maturation; the sequence is MNKLNSNAVVSLNEVSDSELDTILGG. A cross-link (beta-methyllanthionine (Thr-Cys)) is located at residues 36–41; it reads TVSYEC. Cross-links (lanthionine (Ser-Cys)) lie at residues 38–52 and 45–53; these read SYEC…VFTC and SWQHVFTCC. Thr-51 bears the 2,3-didehydrobutyrine mark.

Maturation of lantibiotics involves the enzymatic conversion of Thr, and Ser into dehydrated AA and the formation of thioether bonds with cysteine. This is followed by membrane translocation and cleavage of the modified precursor. Post-translationally, it is not established whether the 2,3-didehydrobutyrine is the E- or Z-isomer.

Its function is as follows. Lanthionine-containing peptide antibiotic (lantibiotic) active on Gram-positive bacteria including M.luteus, S.aureus, Streptococcus, P.micros, P.acidilactici, C.sporogenes, C.diphtheriae, A.viscosus, G.vaginalis, P.acnes, L.monocytogenes and M.smegmatis, and Gram-negative bacteria including C.jejuni, H.pylori and N.gonorrhoeae. Transiently and partially depolarizes the transmembrane electrical potential and pH gradient of susceptible cells, inhibits the uptake of amino acids and depletes the intracellular ATP pool. This is Lantibiotic mutacin-2 from Streptococcus mutans.